The sequence spans 1046 residues: MDPKRPTFPSPPGVIRAPWQQSTEDQSQLLDQPSLGRARGLIMPIDEPLPGRGRAFSVPGEMPVRFGRGITQSIAAEPLVGMARGVRLPMEEGGFGRGRGFLLPTPEPTVGIGRGAAIGPVPTLDIQKAEVEEKMPELQAEVAPTVAKVGSPGTGSSLVSMFRGLGIEPGKTWGRGAAPVGRGAAGDMGADLQPKPTIIGASLTPEREEVRSEESISFLGRGFTGFGRAAMPHMTVGRGPIGPLSPSPSVAAPFSLISASSASEDAPVAPGTPPKVEVKIETVKEPLQKIGTKGSPIPIGSNYIPICCKNDAVFQYHVTFTPNVESLSMRFGMMKEHRPTTGEVVAFDGSILYLPKRLEEVVHLKAERKTDNQEIDIKIQLTKILPPSSDLCIPFYNVVLRRVMKILGLKLVGRNHYDPNAVVILGKHRLQVWPGYSTSIKHTDGGLYLVVDVSHKVLRNDSVLDVMNLIYQGSRESFQDECTKEFVGSIVITRYNNRTYRIDDIEWSKSPKDTFTLADGSVTTFVDYYRKNYGITIKELDQPLLIHRPKERSRPGGKVITGEILLLPELSFMTGIPEKMRKDFRAMKDLTMHINVGAQQHTQSLKQLLHNINSNNEALSELGRWGLSISQEILVTQGRTLPSETICLHSASFVTSPAVDWSRELVRDPSISTVPLNCWAVFYPRRATDQAEELVTTFSRVAGPMGMRVERPIRVELRDDRTETFVKSIHSQLTSEPRVQLVVCIMTGNRDDLYSAIKKLCCIQSPVPSQAINVRTISQPQKLRSVAQKILLQINCKLGGELWTVNVPLKYLMVIGVDVHHDTSKKSRSVMGFVASLNSMLTKWYSRVTFQMPNEEIINGFRVCLLAALQKYYEVNHAFPEKIVIYRDGVSDGQLKTVEHYEIPQILKCFETIPNYEPKLAFIVVQKRISTTLYSYGSDHFGTPSPGTVLDHTVTNRDWVDFYLMAHSIRQGCGLPTHYITVYNTANLTPDHLQRLTFKMCHLYWNWPGTIRVPAPCKYAHKLAFLSGQYLHSEPAIQLSEKLFFL.

The span at 1–12 shows a compositional bias: pro residues; the sequence is MDPKRPTFPSPP. The disordered stretch occupies residues 1–35; that stretch reads MDPKRPTFPSPPGVIRAPWQQSTEDQSQLLDQPSL. Residues 19–31 are compositionally biased toward polar residues; that stretch reads WQQSTEDQSQLLD. Residues 462–575 form the PAZ domain; it reads SVLDVMNLIY…LLPELSFMTG (114 aa). A Piwi domain is found at 741-1032; sequence LVVCIMTGNR…LAFLSGQYLH (292 aa). Active-site residues include aspartate 818, glutamate 856, aspartate 888, and histidine 1021.

Belongs to the argonaute family. Piwi subfamily. In terms of assembly, component of the PET complex. Mg(2+) serves as cofactor. Post-translationally, methylated on arginine residues; required for the interaction with Tudor domain-containing protein and subsequent localization to the meiotic nuage, also named P granule. As to expression, detected in primordial germ cells (PGCs) from 3 dpf. In adult, it is found in both the female and male gonad. In the ovary, it is present in all stages of germ cell differentiation. In testis, it is present in mitotic and meiotic germ cells. No protein has been detected in the fully differentiated sperm cell.

The protein resides in the cytoplasm. It localises to the nucleus. Its function is as follows. Endoribonuclease that plays a central role during spermatogenesis by repressing transposable elements and preventing their mobilization, which is essential for the germline integrity. Plays an essential role in germ cell differentiation and meiosis, independently of the function in transposable elements repression. Acts via the piRNA metabolic process, which mediates the repression of transposable elements during meiosis by forming complexes composed of piRNAs and Piwi proteins and govern the methylation and subsequent repression of transposons. During piRNA biosynthesis, plays a key role in the piRNA amplification loop, also named ping-pong amplification cycle, by acting as a 'slicer-competent' piRNA endoribonuclease that cleaves primary piRNAs, which are then loaded onto 'slicer-incompetent' piwil4. Piwil2 slicing produces a pre-miRNA intermediate, which is then processed in mature piRNAs, and as well as a 16 nucleotide by-product that is degraded. Required for piwil4/miwi2 nuclear localization and association with secondary piRNAs antisense. Represses circadian rhythms by promoting the stability and activity of core clock components BMAL1 and CLOCK. The chain is Piwi-like protein 2 (piwil2) from Danio rerio (Zebrafish).